Reading from the N-terminus, the 312-residue chain is Short chain dehydrogenase pgmD (312 aa).

6 residues coordinate NADP(+): Val-46, Ile-47, Lys-171, Tyr-207, Lys-211, and Thr-242. The active-site Proton donor is the Tyr-207. Catalysis depends on Lys-211, which acts as the Lowers pKa of active site Tyr.

The protein belongs to the short-chain dehydrogenases/reductases (SDR) family.

Its pathway is pigment biosynthesis. The protein operates within secondary metabolite biosynthesis. In terms of biological role, short chain dehydrogenase; part of the gene cluster that mediates the biosynthesis of pleosporalin A, ascomycone A, as well as a third cryptic naphthoquinone derived pigment, all responsible for the coloration of conidia. Essential for the production of pleosporalin A, but not the 2 other final products. The pathway begins with the biosynthesis of the cyclized heptaketide 3-acetonyl-1,6,8-trihydroxy-2-naphthaldehyde by the NR-PKS pgmA. The C-6 hydroxyl group is further methylated by the O-methyltransferase pgmB to yield fusarubinaldehyde which is in turn oxidized by the cytochrome P450 monooxygenase pgmC at C-9. The C-1 hydroxyl group is then methylated spontaneously. Although pgmE, pgmD and pgmH are essential for the production of pleosporalin A, it is not the case for the 2 other final products and it remains difficult to assign a specific function to each enzyme. PgmF and pgmG seem not to be involved in pigment biosynthesis although they were regulated by the cluster-specific transcription factor pgmR. The chain is Short chain dehydrogenase pgmD from Aspergillus terreus.